The sequence spans 176 residues: Ribosome maturation factor RimM (176 aa).

The 74-residue stretch at 100-173 folds into the PRC barrel domain; the sequence is KDEYHYHDLI…WLLINPPPGL (74 aa).

It belongs to the RimM family. In terms of assembly, binds ribosomal protein uS19.

It localises to the cytoplasm. In terms of biological role, an accessory protein needed during the final step in the assembly of 30S ribosomal subunit, possibly for assembly of the head region. Essential for efficient processing of 16S rRNA. May be needed both before and after RbfA during the maturation of 16S rRNA. It has affinity for free ribosomal 30S subunits but not for 70S ribosomes. In Prochlorococcus marinus (strain NATL1A), this protein is Ribosome maturation factor RimM.